The primary structure comprises 127 residues: Fluoride-specific ion channel FluC (127 aa).

4 helical membrane-spanning segments follow: residues 4–24, 36–56, 68–88, and 99–119; these read SILAIALGAALGALLRWFLGL, GTLLANLVGGYVIGAAIAYFA, LIITGFCGGLTTFSTFSAEVV, and AAGAIATHVSGSLLMTLLGLF. Na(+)-binding residues include glycine 75 and threonine 78.

The protein belongs to the fluoride channel Fluc/FEX (TC 1.A.43) family.

It localises to the cell inner membrane. The catalysed reaction is fluoride(in) = fluoride(out). With respect to regulation, na(+) is not transported, but it plays an essential structural role and its presence is essential for fluoride channel function. Its function is as follows. Fluoride-specific ion channel. Important for reducing fluoride concentration in the cell, thus reducing its toxicity. In Pseudomonas aeruginosa (strain UCBPP-PA14), this protein is Fluoride-specific ion channel FluC.